Reading from the N-terminus, the 218-residue chain is Small ribosomal subunit protein uS3c (218 aa).

A KH type-2 domain is found at 47 to 118 (VQKNIRISSG…KLNIAITRIS (72 aa)).

It belongs to the universal ribosomal protein uS3 family. Part of the 30S ribosomal subunit.

The protein resides in the plastid. It localises to the chloroplast. In Nasturtium officinale (Watercress), this protein is Small ribosomal subunit protein uS3c (rps3).